Reading from the N-terminus, the 268-residue chain is Mitochondrial distribution and morphology protein 12 (268 aa).

The 256-residue stretch at 1-256 folds into the SMP-LTD domain; the sequence is MSFEINWQDL…WPSWINLDFN (256 aa). The segment at 75 to 94 is disordered; sequence LPKDKIPEESDSGCQSADGE.

It belongs to the MDM12 family. Component of the ER-mitochondria encounter structure (ERMES) or MDM complex, composed of MMM1, MDM10, MDM12 and MDM34. An MMM1 homodimer associates with one molecule of MDM12 on each side in a pairwise head-to-tail manner, and the SMP-LTD domains of MMM1 and MDM12 generate a continuous hydrophobic tunnel for phospholipid trafficking.

It is found in the mitochondrion outer membrane. Its subcellular location is the endoplasmic reticulum membrane. Component of the ERMES/MDM complex, which serves as a molecular tether to connect the endoplasmic reticulum (ER) and mitochondria. Components of this complex are involved in the control of mitochondrial shape and protein biogenesis, and function in nonvesicular lipid trafficking between the ER and mitochondria. MDM12 is required for the interaction of the ER-resident membrane protein MMM1 and the outer mitochondrial membrane-resident beta-barrel protein MDM10. The MDM12-MMM1 subcomplex functions in the major beta-barrel assembly pathway that is responsible for biogenesis of all mitochondrial outer membrane beta-barrel proteins, and acts in a late step after the SAM complex. The MDM10-MDM12-MMM1 subcomplex further acts in the TOM40-specific pathway after the action of the MDM12-MMM1 complex. Essential for establishing and maintaining the structure of mitochondria and maintenance of mtDNA nucleoids. The chain is Mitochondrial distribution and morphology protein 12 from Lachancea thermotolerans (strain ATCC 56472 / CBS 6340 / NRRL Y-8284) (Yeast).